A 44-amino-acid chain; its full sequence is Somatoliberin (44 aa).

At L44 the chain carries Leucine amide.

The protein belongs to the glucagon family.

Its subcellular location is the secreted. In terms of biological role, GRF is released by the hypothalamus and acts on the adenohypophyse to stimulate the secretion of growth hormone. In Ovis aries (Sheep), this protein is Somatoliberin (GHRH).